Consider the following 119-residue polypeptide: Ribonuclease P protein component (119 aa).

It belongs to the RnpA family. Consists of a catalytic RNA component (M1 or rnpB) and a protein subunit.

It catalyses the reaction Endonucleolytic cleavage of RNA, removing 5'-extranucleotides from tRNA precursor.. Its function is as follows. RNaseP catalyzes the removal of the 5'-leader sequence from pre-tRNA to produce the mature 5'-terminus. It can also cleave other RNA substrates such as 4.5S RNA. The protein component plays an auxiliary but essential role in vivo by binding to the 5'-leader sequence and broadening the substrate specificity of the ribozyme. The polypeptide is Ribonuclease P protein component (Yersinia pseudotuberculosis serotype O:1b (strain IP 31758)).